The chain runs to 166 residues: Deglycase PfpI (166 aa).

In terms of domain architecture, PfpI endopeptidase spans 1–166; that stretch reads MKILFLSANE…WMREFVKLLK (166 aa). Cys100 functions as the Nucleophile in the catalytic mechanism. His101 is an active-site residue.

Belongs to the peptidase C56 family. Homooligomer. Exists in two functional species: the predominant form is a homohexamer that comprises about 90% of the total activity, and the minor form is trimeric.

Its subcellular location is the cytoplasm. The catalysed reaction is N(omega)-(1-hydroxy-2-oxopropyl)-L-arginyl-[protein] + H2O = lactate + L-arginyl-[protein] + H(+). The enzyme catalyses N(6)-(1-hydroxy-2-oxopropyl)-L-lysyl-[protein] + H2O = lactate + L-lysyl-[protein] + H(+). It catalyses the reaction S-(1-hydroxy-2-oxopropyl)-L-cysteinyl-[protein] + H2O = lactate + L-cysteinyl-[protein] + H(+). It carries out the reaction N(omega)-(1-hydroxy-2-oxoethyl)-L-arginyl-[protein] + H2O = L-arginyl-[protein] + glycolate + H(+). The catalysed reaction is N(6)-(1-hydroxy-2-oxoethyl)-L-lysyl-[protein] + H2O = glycolate + L-lysyl-[protein] + H(+). The enzyme catalyses S-(1-hydroxy-2-oxoethyl)-L-cysteinyl-[protein] + H2O = glycolate + L-cysteinyl-[protein] + H(+). In terms of biological role, deglycase that catalyzes the deglycation of the Maillard adducts formed between amino groups of proteins and reactive carbonyl groups of glyoxals. Thus, functions as a protein deglycase that repairs methylglyoxal- and glyoxal-glycated proteins, and releases repaired proteins and lactate or glycolate, respectively. Deglycates cysteine, arginine and lysine residues in proteins, and thus reactivates these proteins by reversing glycation by glyoxals. Thus, was shown to afford full protection against glycation of thioredoxin by glyoxal. Acts on early glycation intermediates (hemithioacetals and aminocarbinols), preventing the formation of advanced glycation endproducts (AGE) that cause irreversible damage. Prevents acrylamide formation in asparagine/glyoxal and asparagine/sugar mixtures, likely by degrading asparagine/glyoxal Maillard adducts formed at high temperatures. Also displays proteolytic activity. Cleaves at the carboxyl side of both basic and hydrophobic residues in the P1 position, indicating trypsin- and chymotrypsin-like specificities. This Pyrococcus furiosus (strain ATCC 43587 / DSM 3638 / JCM 8422 / Vc1) protein is Deglycase PfpI.